A 283-amino-acid chain; its full sequence is Nucleotide-binding protein IL0393 (283 aa).

8–15 (GRSGSGKT) is an ATP binding site. Residue 56–59 (DVRN) participates in GTP binding.

It belongs to the RapZ-like family.

In terms of biological role, displays ATPase and GTPase activities. This chain is Nucleotide-binding protein IL0393, found in Idiomarina loihiensis (strain ATCC BAA-735 / DSM 15497 / L2-TR).